The chain runs to 201 residues: Ras-related protein Rab-1B (201 aa).

Position 1 is an N-acetylmethionine (methionine 1). GTP-binding residues include serine 17, glycine 18, valine 19, glycine 20, lysine 21, serine 22, cysteine 23, tyrosine 33, threonine 34, glutamate 35, serine 36, serine 39, and threonine 40. Serine 22 is a Mg(2+) binding site. The Switch 1 signature appears at 30–45 (DDTYTESYISTIGVDF). Mg(2+)-binding residues include threonine 40 and aspartate 63. Positions 64–83 (TAGQERGRTITSSYYRGAHG) are switch 2 region; required for interaction with REP1/CHM. The short motif at 65–80 (AGQERGRTITSSYYRG) is the Switch 2 element. GTP contacts are provided by glycine 66, asparagine 121, lysine 122, aspartate 124, serine 151, alanine 152, and lysine 153. The tract at residues 173-201 (MGPGAASGGERPNLKIDSTPVKQAGGGCC) is disordered. S-geranylgeranyl cysteine attachment occurs at residues cysteine 200 and cysteine 201. At cysteine 201 the chain carries Cysteine methyl ester.

This sequence belongs to the small GTPase superfamily. Rab family. Interacts with MICAL1 and MICAL2. Interacts (in GTP-bound form) with MICALCL, MICAL1 and MILCAL3. Interacts with GDI1; the interaction requires the GDP-bound state. Interacts with CHM/REP1; the interaction requires the GDP-bound form and is necessary for prenylation by GGTase II. Interacts with RabGAP TBC1D20. Interacts (in GDP-bound form) with lipid phosphatase MTMR6 (via GRAM domain); the interaction regulates MTMR6 recruitment to the endoplasmic reticulum-Golgi intermediate compartment. Interacts (in GDP-bound form) with lipid phosphatase MTMR7. The cofactor is Mg(2+). In terms of processing, prenylated; by GGTase II, only after interaction of the substrate with Rab escort protein 1 (REP1).

The protein resides in the cytoplasm. The protein localises to the membrane. It localises to the preautophagosomal structure membrane. Its subcellular location is the perinuclear region. It catalyses the reaction GTP + H2O = GDP + phosphate + H(+). With respect to regulation, regulated by guanine nucleotide exchange factors (GEFs) which promote the exchange of bound GDP for free GTP. Regulated by GTPase activating proteins (GAPs) including TBC1D20 which increases the GTP hydrolysis activity. Inhibited by GDP dissociation inhibitors (GDIs). In terms of biological role, the small GTPases Rab are key regulators of intracellular membrane trafficking, from the formation of transport vesicles to their fusion with membranes. Rabs cycle between an inactive GDP-bound form and an active GTP-bound form that is able to recruit to membranes different set of downstream effectors directly responsible for vesicle formation, movement, tethering and fusion. Plays a role in the initial events of the autophagic vacuole development which take place at specialized regions of the endoplasmic reticulum. Regulates vesicular transport between the endoplasmic reticulum and successive Golgi compartments. Required to modulate the compacted morphology of the Golgi. Promotes the recruitment of lipid phosphatase MTMR6 to the endoplasmic reticulum-Golgi intermediate compartment. The chain is Ras-related protein Rab-1B (RAB1B) from Sus scrofa (Pig).